Reading from the N-terminus, the 747-residue chain is Homeobox-leucine zipper protein GLABRA 2 (747 aa).

Residues Arg31–Gln112 are disordered. Over residues Glu58–Arg68 the composition is skewed to polar residues. Positions Glu73–Gly90 are enriched in acidic residues. Over residues Thr97–Arg107 the composition is skewed to basic residues. A DNA-binding region (homeobox) is located at residues Lys101 to Gln160. Residues Gln155–Arg223 adopt a coiled-coil conformation. The 240-residue stretch at Phe250–Phe489 folds into the START domain.

It belongs to the HD-ZIP homeobox family. Class IV subfamily. As to quaternary structure, interacts with GIR1 and GIR2. As to expression, expressed in individual developing trichome cells of the emerging leaf primordia. Expressed in differentiating hairless cells of root epidermis.

It is found in the nucleus. Functionally, transcription factor involved in the determination of epidermal cell identity. Required for correct morphological development and maturation of trichomes. Regulates the frequency of trichome initiation and determines trichome spacing. Acts as a negative factor for root hair development. Required for ectopic repression of root hair development in a subset of epidermal cells. May suppress hair formation in root epidermis by promoting differentiation into hairless epidermal cells. Directly suppresses the bHLH transcription factor genes, RHD6, RSL1, RSL2, LRL1, and LRL2, which have diverse functions in root hair development. Required for normal development of seed coat mucilage. Involved in the control of seed oil accumulation. Acts as a negative regulator of anthocyanin biosynthesis. May directly repress the expression of some component genes from the MYB-bHLH-WD40 (MBW) transcriptional activator complex. The MBW complex activates the transcription of late biosynthesis genes in the flavonoid pathway, leading to the production of anthocyanins. The sequence is that of Homeobox-leucine zipper protein GLABRA 2 from Arabidopsis thaliana (Mouse-ear cress).